The chain runs to 112 residues: Large ribosomal subunit protein bL17 (112 aa).

This sequence belongs to the bacterial ribosomal protein bL17 family. In terms of assembly, part of the 50S ribosomal subunit. Contacts protein L32.

This Desulfitobacterium hafniense (strain DSM 10664 / DCB-2) protein is Large ribosomal subunit protein bL17.